A 663-amino-acid polypeptide reads, in one-letter code: Polyunsaturated fatty acid lipoxygenase ALOX15 (663 aa).

A PLAT domain is found at 2-115; the sequence is GVYRIRVSTG…ILNLPEGTGC (114 aa). Residues 116–663 form the Lipoxygenase domain; it reads TVVEDSQGLF…PSLVENSVAI (548 aa). Fe cation contacts are provided by H361, H366, H541, H545, and I663.

This sequence belongs to the lipoxygenase family. In terms of assembly, interacts with PEBP1; in response to IL13/interleukin-13, prevents the interaction of PEBP1 with RAF1 to activate the ERK signaling cascade. Fe cation is required as a cofactor. In terms of tissue distribution, found in pituitary and pineal glands as well as leukocytes, kidney, aorta, small intestine and cornea. Also expressed by resident peritoneal macrophages (at protein level).

It localises to the cytoplasm. The protein resides in the cytosol. It is found in the cell membrane. Its subcellular location is the lipid droplet. It carries out the reaction (5Z,8Z,11Z,14Z)-eicosatetraenoate + O2 = (12S)-hydroperoxy-(5Z,8Z,10E,14Z)-eicosatetraenoate. The catalysed reaction is (5Z,8Z,11Z,14Z)-eicosatetraenoate + O2 = (15S)-hydroperoxy-(5Z,8Z,11Z,13E)-eicosatetraenoate. It catalyses the reaction (9Z,12Z)-octadecadienoate + O2 = (13S)-hydroperoxy-(9Z,11E)-octadecadienoate. The enzyme catalyses (5Z,8Z,11Z,14Z)-eicosatetraenoate + 2 O2 = (14R,15S)-dihydroperoxy-(5Z,8Z,10E,12E)-eicosatetraenoate. It carries out the reaction (5Z,8Z,11Z,14Z)-eicosatetraenoate + 2 O2 = (8S,15S)-dihydroperoxy-(5Z,9E,11Z,13E)-eicosatetraenoate. The catalysed reaction is (14S,15R)-epoxy-(5Z,8Z,11Z)-eicosatrienoate + O2 = (8S)-hydroperoxy-(14S,15R)-epoxy-(5Z,9E,11Z)-eicosatrienoate. It catalyses the reaction (14S,15R)-epoxy-(5Z,8Z,11Z)-eicosatrienoate + O2 = (12S)-hydroperoxy-(14S,15R)-epoxy-(5Z,8Z,10E)-eicosatrienoate. The enzyme catalyses (14R,15S)-epoxy-(5Z,8Z,11Z)-eicosatrienoate + O2 = (5S)-hydroperoxy-(14R,15S)-epoxy-(6E,8Z,11Z)-eicosatrienoate. It carries out the reaction (14R,15S)-epoxy-(5Z,8Z,11Z)-eicosatrienoate + O2 = (12S)-hydroperoxy-(14R,15S)-epoxy-(5Z,8Z,10E)-eicosatrienoate. The catalysed reaction is (15R)-hydroperoxy-(5Z,8Z,11Z,13E)-eicosatetraenoate = 15-oxo-(5Z,8Z,11Z,13E)-eicosatetraenoate + H2O. It catalyses the reaction (15S)-hydroperoxy-(5Z,8Z,11Z,13E)-eicosatetraenoate = (14S,15S)-epoxy-(5Z,8Z,10E,12E)-eicosatetraenoate + H2O. The enzyme catalyses (12S)-hydroperoxy-(5Z,8Z,10E,14Z)-eicosatetraenoate = (8S)-hydroxy-(11S,12S)-epoxy-(5Z,9E,14Z)-eicosatrienoate. It carries out the reaction (4Z,7Z,10Z,13Z,16Z)-docosapentaenoate + O2 = 14-hydroperoxy-(4Z,7Z,10Z,12E,16Z)-docosapentaenoate. The catalysed reaction is (7Z,10Z,13Z,16Z,19Z)-docosapentaenoate + O2 = 14-hydroperoxy-(7Z,10Z,12E,16Z,19Z)-docosapentaenoate. It catalyses the reaction (4Z,7Z,10Z,13Z,16Z,19Z)-docosahexaenoate + O2 = (14S)-hydroperoxy-(4Z,7Z,10Z,12E,16Z,19Z)-docosahexaenoate. The enzyme catalyses (4Z,7Z,10Z,13Z,16Z,19Z)-docosahexaenoate + O2 = (17S)-hydroperoxy-(4Z,7Z,10Z,13Z,15E,19Z)-docosahexaenoate. It carries out the reaction (7S)-hydroperoxy-(4Z,8E,10Z,13Z,16Z,19Z)-docosahexaenoate + O2 = (7S,14S)-dihydroperoxy-(4Z,8E,10Z,12E,16Z,19Z)-docosahexaenoate. The catalysed reaction is (7S)-hydroperoxy-(4Z,8E,10Z,13Z,16Z,19Z)-docosahexaenoate + O2 = (7S,17S)-dihydroperoxy-(4Z,8E,10Z,13Z,15E,19Z)-docosahexaenoate. It catalyses the reaction (4Z,7Z,10Z,13Z,16Z,19Z)-docosahexaenoate + O2 = (11S)-hydroperoxy-(4Z,7Z,9E,13Z,16Z,19Z)-docosahexaenoate. The enzyme catalyses N-(5Z,8Z,11Z,14Z)-eicosatetraenoyl-taurine + O2 = N-(12S)-hydroperoxy-(5Z,8Z,10E,14Z)-eicosatetraenoyl-taurine. It carries out the reaction N-(5Z,8Z,11Z,14Z)-eicosatetraenoyl-gamma-aminobutanoate + O2 = N-(12S)-hydroperoxy-(5Z,8Z,10E,14Z)-eicosatetraenoyl-gamma-aminobutanoate. The catalysed reaction is N-(5Z,8Z,11Z,14Z)-eicosatetraenoyl-glycine + O2 = N-(12S)-hydroperoxy-(5Z,8Z,10E,14Z)-eicosatetraenoyl-glycine. It catalyses the reaction N-(5Z,8Z,11Z,14Z)-eicosatetraenoyl-L-alanine + O2 = N-(12S)-hydroperoxy-(5Z,8Z,10E,14Z)-eicosatetraenoyl-alanine. The enzyme catalyses N-(5Z,8Z,11Z,14Z)-eicosatetraenoyl-taurine + O2 = N-(15S)-hydroperoxy-(5Z,8Z,11Z,13E)-eicosatetraenoyl-taurine. It carries out the reaction N-(5Z,8Z,11Z,14Z)-eicosatetraenoyl-gamma-aminobutanoate + O2 = N-(15S)-hydroperoxy-(5Z,8Z,11Z,13E)-eicosatetraenoyl-gamma-aminobutanoate. The catalysed reaction is N-(5Z,8Z,11Z,14Z)-eicosatetraenoyl-glycine + O2 = N-(15S)-hydroperoxy-(5Z,8Z,11Z,13E)-eicosatetraenoyl-glycine. It catalyses the reaction N-(5Z,8Z,11Z,14Z)-eicosatetraenoyl-L-alanine + O2 = N-(15S)-hydroperoxy-(5Z,8Z,11Z,13E)-eicosatetraenoyl-alanine. Its pathway is lipid metabolism; hydroperoxy eicosatetraenoic acid biosynthesis. Its function is as follows. Non-heme iron-containing dioxygenase that catalyzes the stereo-specific peroxidation of free and esterified polyunsaturated fatty acids generating a spectrum of bioactive lipid mediators. It inserts peroxyl groups at C12 or C15 of arachidonate ((5Z,8Z,11Z,14Z)-eicosatetraenoate) producing both 12-hydroperoxyeicosatetraenoate/12-HPETE and 15-hydroperoxyeicosatetraenoate/15-HPETE. It may then act on 12-HPETE to produce hepoxilins, which may show pro-inflammatory properties. Can also peroxidize linoleate ((9Z,12Z)-octadecadienoate) to 13-hydroperoxyoctadecadienoate. May participate in the sequential oxidations of DHA ((4Z,7Z,10Z,13Z,16Z,19Z)-docosahexaenoate) to generate specialized pro-resolving mediators (SPMs)like resolvin D5 ((7S,17S)-diHPDHA) and (7S,14S)-diHPDHA, that actively down-regulate the immune response and have anti-aggregation properties with platelets. Can convert epoxy fatty acids to hydroperoxy-epoxides derivatives followed by an intramolecular nucleophilic substitution leading to the formation of monocyclic endoperoxides. Plays an important role during the maintenance of self-tolerance by peroxidizing membrane-bound phosphatidylethanolamine which can then signal the sorting process for clearance of apoptotic cells during inflammation and prevent an autoimmune response. In addition to its role in the immune and inflammatory responses, this enzyme may play a role in epithelial wound healing in the cornea through production of lipoxin A4 (LXA(4)) and docosahexaenoic acid-derived neuroprotectin D1 (NPD1; 10R,17S-HDHA), both lipid autacoids exhibit anti-inflammatory and neuroprotective properties. Furthermore, it may regulate actin polymerization which is crucial for several biological processes such as the phagocytosis of apoptotic cells. It is also implicated in the generation of endogenous ligands for peroxisome proliferator activated receptor (PPAR-gamma), hence modulating macrophage development and function. It may also exert a negative effect on skeletal development by regulating bone mass through this pathway. As well as participates in ER stress and downstream inflammation in adipocytes, pancreatic islets, and liver. Finally, it is also involved in the cellular response to IL13/interleukin-13. In Mus musculus (Mouse), this protein is Polyunsaturated fatty acid lipoxygenase ALOX15.